The sequence spans 552 residues: 4-coumarate--CoA ligase-like 4 (552 aa).

The interval 182 to 205 (ISATTPDPARRKDRVTQDDPATLL) is disordered. Positions 189 to 198 (PARRKDRVTQ) are enriched in basic and acidic residues. ATP-binding residues include S207, S208, G209, T210, T211, and K215. A (E)-4-coumaroyl-AMP-binding site is contributed by Y256. K277 contacts CoA. The tract at residues 279–346 (ELPEMLRSIN…EKYPQVEILQ (68 aa)) is SBD1. Positions 324, 346, 347, and 351 each coordinate (E)-4-coumaroyl-AMP. Residues Q346, G347, T351, D432, and R447 each coordinate ATP. The tract at residues 347 to 411 (GYGLTESTAI…IRGPYVMKGY (65 aa)) is SBD2. Positions 449 and 453 each coordinate (E)-4-coumaroyl-AMP. 2 residues coordinate CoA: K455 and G456. K538 serves as a coordination point for ATP.

Belongs to the ATP-dependent AMP-binding enzyme family. It depends on Mg(2+) as a cofactor.

The catalysed reaction is (E)-4-coumarate + ATP + CoA = (E)-4-coumaroyl-CoA + AMP + diphosphate. It carries out the reaction (E)-4-coumarate + ATP + H(+) = (E)-4-coumaroyl-AMP + diphosphate. The enzyme catalyses (E)-4-coumaroyl-AMP + CoA = (E)-4-coumaroyl-CoA + AMP + H(+). In terms of biological role, carboxylate--CoA ligase that may use 4-coumarate as substrate. Follows a two-step reaction mechanism, wherein the carboxylate substrate first undergoes adenylation by ATP, followed by a thioesterification in the presence of CoA to yield the final CoA thioester. The chain is 4-coumarate--CoA ligase-like 4 (4CLL4) from Oryza sativa subsp. japonica (Rice).